The sequence spans 460 residues: Alpha-amylase (460 aa).

An N-terminal signal peptide occupies residues 1–21; the sequence is MASRTLSGALALAAAATAVLA. Positions 121, 167, and 176 each coordinate Ca(2+). The active-site Nucleophile is the Asp206. His210 lines the Ca(2+) pocket. The active-site Proton donor is Glu233.

It belongs to the glycosyl hydrolase 13 family. Monomer. Ca(2+) serves as cofactor.

It catalyses the reaction Endohydrolysis of (1-&gt;4)-alpha-D-glucosidic linkages in polysaccharides containing three or more (1-&gt;4)-alpha-linked D-glucose units.. In Streptomyces thermoviolaceus, this protein is Alpha-amylase (amy).